Here is a 293-residue protein sequence, read N- to C-terminus: Probable porphobilinogen deaminase (293 aa).

Cys-233 carries the post-translational modification S-(dipyrrolylmethanemethyl)cysteine.

This sequence belongs to the HMBS family. It depends on dipyrromethane as a cofactor.

The enzyme catalyses 4 porphobilinogen + H2O = hydroxymethylbilane + 4 NH4(+). The protein operates within porphyrin-containing compound metabolism; protoporphyrin-IX biosynthesis; coproporphyrinogen-III from 5-aminolevulinate: step 2/4. Tetrapolymerization of the monopyrrole PBG into the hydroxymethylbilane pre-uroporphyrinogen in several discrete steps. This is Probable porphobilinogen deaminase from Saccharolobus islandicus (strain M.16.27) (Sulfolobus islandicus).